A 199-amino-acid chain; its full sequence is Cytochrome c oxidase subunit 2 (199 aa).

Residues 1-13 traverse the membrane as a helical segment; it reads AICSLVLYLLSLM. Residues 14–26 lie on the Mitochondrial matrix side of the membrane; it reads LMEKLSSNTVDAQ. A helical transmembrane segment spans residues 27–54; it reads EVELIWTILPAIVLILLALPSLQILYMM. At 55-199 the chain is on the mitochondrial intermembrane side; sequence DEIDEPDLTL…SSLLSSSSSL (145 aa). Cu cation contacts are provided by H128, C163, E165, C167, H171, and M174. E165 is a Mg(2+) binding site.

It belongs to the cytochrome c oxidase subunit 2 family. As to quaternary structure, component of the cytochrome c oxidase (complex IV, CIV), a multisubunit enzyme composed of 14 subunits. The complex is composed of a catalytic core of 3 subunits MT-CO1, MT-CO2 and MT-CO3, encoded in the mitochondrial DNA, and 11 supernumerary subunits COX4I, COX5A, COX5B, COX6A, COX6B, COX6C, COX7A, COX7B, COX7C, COX8 and NDUFA4, which are encoded in the nuclear genome. The complex exists as a monomer or a dimer and forms supercomplexes (SCs) in the inner mitochondrial membrane with NADH-ubiquinone oxidoreductase (complex I, CI) and ubiquinol-cytochrome c oxidoreductase (cytochrome b-c1 complex, complex III, CIII), resulting in different assemblies (supercomplex SCI(1)III(2)IV(1) and megacomplex MCI(2)III(2)IV(2)). Found in a complex with TMEM177, COA6, COX18, COX20, SCO1 and SCO2. Interacts with TMEM177 in a COX20-dependent manner. Interacts with COX20. Interacts with COX16. Cu cation serves as cofactor.

Its subcellular location is the mitochondrion inner membrane. It carries out the reaction 4 Fe(II)-[cytochrome c] + O2 + 8 H(+)(in) = 4 Fe(III)-[cytochrome c] + 2 H2O + 4 H(+)(out). Component of the cytochrome c oxidase, the last enzyme in the mitochondrial electron transport chain which drives oxidative phosphorylation. The respiratory chain contains 3 multisubunit complexes succinate dehydrogenase (complex II, CII), ubiquinol-cytochrome c oxidoreductase (cytochrome b-c1 complex, complex III, CIII) and cytochrome c oxidase (complex IV, CIV), that cooperate to transfer electrons derived from NADH and succinate to molecular oxygen, creating an electrochemical gradient over the inner membrane that drives transmembrane transport and the ATP synthase. Cytochrome c oxidase is the component of the respiratory chain that catalyzes the reduction of oxygen to water. Electrons originating from reduced cytochrome c in the intermembrane space (IMS) are transferred via the dinuclear copper A center (CU(A)) of subunit 2 and heme A of subunit 1 to the active site in subunit 1, a binuclear center (BNC) formed by heme A3 and copper B (CU(B)). The BNC reduces molecular oxygen to 2 water molecules using 4 electrons from cytochrome c in the IMS and 4 protons from the mitochondrial matrix. In Rhea americana (Greater rhea), this protein is Cytochrome c oxidase subunit 2 (MT-CO2).